The chain runs to 342 residues: Phosphoribosylformylglycinamidine cyclo-ligase (342 aa).

Belongs to the AIR synthase family.

Its subcellular location is the cytoplasm. It carries out the reaction 2-formamido-N(1)-(5-O-phospho-beta-D-ribosyl)acetamidine + ATP = 5-amino-1-(5-phospho-beta-D-ribosyl)imidazole + ADP + phosphate + H(+). The protein operates within purine metabolism; IMP biosynthesis via de novo pathway; 5-amino-1-(5-phospho-D-ribosyl)imidazole from N(2)-formyl-N(1)-(5-phospho-D-ribosyl)glycinamide: step 2/2. The chain is Phosphoribosylformylglycinamidine cyclo-ligase from Staphylococcus aureus (strain USA300).